A 65-amino-acid polypeptide reads, in one-letter code: Sarcoplasmic/endoplasmic reticulum calcium ATPase regulator ARLN (65 aa).

Position 1 is an N-acetylmethionine (Met1). Residues 1-38 (MEVGQAASGTDGVRERRGSSAARRRSQDEPVQSGMNGI) are disordered. 2 positions are modified to phosphoserine: Ser19 and Ser26. The chain crosses the membrane as a helical span at residues 44–64 (WLDLWLFILFDLALFIFVYLL).

As to quaternary structure, homooligomer. Can also form heterooligomers with other sarcoplasmic/endoplasmic reticulum calcium ATPase (SERCA) regulators ERLN, PLN, SLN and STRIT1/DWORF. Monomer. Interacts as a monomer with ATP2A2/SERCA2; the interaction results in inhibition of ATP2A2 Ca(2+) affinity.

The protein localises to the endoplasmic reticulum membrane. In terms of biological role, inhibits the activity of the calcium ATPases ATP2A2/SERCA2 and ATP2A3/SERCA3 by decreasing their apparent affinity for Ca(2+). The sequence is that of Sarcoplasmic/endoplasmic reticulum calcium ATPase regulator ARLN (Arln) from Rattus norvegicus (Rat).